The following is a 580-amino-acid chain: Alpha-thujene synthase TPS3, chloroplastic (580 aa).

The transit peptide at 1–26 (MALQLLTPSFSFQHSPSPHRLTTLRY) directs the protein to the chloroplast. Positions 296, 333, 337, 473, and 476 each coordinate (2E)-geranyl diphosphate. The Mg(2+) site is built by Asp333 and Asp337. A DDXXD motif motif is present at residues 333 to 337 (DDVYD). Positions 476, 480, and 484 each coordinate Mg(2+).

It belongs to the terpene synthase family. Tpsb subfamily. Monomer. The cofactor is Mg(2+). It depends on Mn(2+) as a cofactor. Mostly expressed in developing and mature fruits, and, to a lower extent, in male leaves. Barely detectable in female leaves and shoots.

The protein resides in the plastid. The protein localises to the chloroplast. The catalysed reaction is (2E)-geranyl diphosphate = alpha-thujene + diphosphate. The enzyme catalyses (2E)-geranyl diphosphate = (1R,5R)-sabinene + diphosphate. The protein operates within secondary metabolite biosynthesis; terpenoid biosynthesis. In terms of biological role, monoterpene synthase (TPS) involved in the biosynthesis of monoterpene natural products used by traditional Chinese medicine to treat headache, inflammation and intoxication. Catalyzes the conversion of (2E)-geranyl diphosphate (GPP) into alpha-thujene and (1R,5R)-sabinene. This chain is Alpha-thujene synthase TPS3, chloroplastic, found in Litsea cubeba (Aromatic litsea).